Here is a 547-residue protein sequence, read N- to C-terminus: MPGKPKHLGVPNGRMVLAVSDGELTSTAGSQAQGEGRGSSLSIHSLPSGPSSPFSTEEQPVASWAQSFERLLQDPRGLAYFTEFLKKEFSAENVTFWKACERFQQIPASDTKQLAQEAHNIYHEFLSSQALSPVNIDRQAWLSEEVLAQPRPDMFRAQQLQIFNLMKFDSYARFVKSPLYQECLLAEAEGRPLREPGSSHLGSPDTARKKPKLKPGKSLPLGVEELGQLPLAEGPCGRPLRKSFRREMTGGAMNSALRRESQGSLNSSASLDLGFLAFVSSKSESHRKSLGSGESESESRPGKYCCVYLPDGTASLALARPGLTIRDMLAGICEKRGLSLPDIKVYLVGNEQKALVLDQDCTVLADQEVRLENRITFQLELVGLERVVRISAKPTKRLQEALQPILAKHGLSLDQVVLHRPGEKQPMDLENPVSSVASQTLVLDTPPDAKMSEARSISPCRSQGCLPRTQTKDSHLPPSSSSLLVEDASSSTGNRQTCDIEGLVELLNRVQSSGAHDQRGLLRKEDLVLPEFLQLPSQRPGSREAPP.

The interval 19–59 (VSDGELTSTAGSQAQGEGRGSSLSIHSLPSGPSSPFSTEEQ) is disordered. Phosphoserine is present on residues serine 20, serine 42, serine 45, serine 143, serine 199, serine 203, and serine 218. Positions 23–58 (ELTSTAGSQAQGEGRGSSLSIHSLPSGPSSPFSTEE) are enriched in polar residues. In terms of domain architecture, RGS spans 67–184 (SFERLLQDPR…VKSPLYQECL (118 aa)). Residues 191-220 (RPLREPGSSHLGSPDTARKKPKLKPGKSLP) form a disordered region. Threonine 249 bears the Phosphothreonine mark. Serine 289 bears the Phosphoserine mark. A necessary for interaction with RABGEF1 region spans residues 300-427 (RPGKYCCVYL…LHRPGEKQPM (128 aa)). RBD domains lie at 303-374 (KYCC…LENR) and 376-446 (TFQL…LDTP). Positions 447 to 496 (PDAKMSEARSISPCRSQGCLPRTQTKDSHLPPSSSSLLVEDASSSTGNRQ) are disordered. Residues 476–491 (LPPSSSSLLVEDASSS) show a composition bias toward low complexity. The GoLoco domain maps to 500–522 (IEGLVELLNRVQSSGAHDQRGLL).

As to quaternary structure, interacts with GNAI1 and GNAI2. Interacts with GNAI3. Interacts with GNAO1. Interacts (via RGS and GoLoco domains) with GNAI1; the interaction occurs in the centrosomes. Interaction with GNAI1 or GNAI3 (via active GTP- or inactive GDP-bound forms) prevents association of RGS14 with centrosomes or nuclear localization. Interacts with RABGEF1; the interactions is GTP-dependent. Interacts with RAP2A; the interactions is GTP-dependent and does not alter its function on G(i) alpha subunits either as GAP or as GDI. Associates with microtubules. Found in a complex with at least BRAF, HRAS, MAP2K1, MAPK3 and RGS14. Interacts with RIC8A (via C-terminus). Interacts (via RBD 1 domain) with HRAS (active GTP-bound form preferentially). Interacts (via RBD domains) with BRAF (via N-terminus); the interaction mediates the formation of a ternary complex with RAF1. Interacts (via RBD domains) with RAF1 (via N-terminus); the interaction mediates the formation of a ternary complex with BRAF. Interacts with KRAS (active GTP-bound form preferentially), MRAS (active GTP-bound form preferentially), NRAS (active GTP-bound form preferentially) and RRAS (active GTP-bound form preferentially). Post-translationally, phosphorylated by PKC. Phosphorylation is increased in presence of forskolin and may enhance the GDI activity on G(i) alpha subunit GNAI1. Expressed in pyramidal neurons of the CA1, CA2 and fasciola cinerea (FC) subregions of the hippocampus and in the olfactory cortex (at protein level). Expressed in brain, spleen, heart, liver, lung, kidney, skin and thymus (at protein level). Expressed in granular layer of the cerebellum, forbrain, striatum, layer V of the cortex, olfactory cortex, tubercules, subthalamic and hippocampus, particularly in the CA2 region, to a lesser extent in the CA1 region and the external layer of the dentate gyrus. Expressed in neurons.

The protein resides in the nucleus. It localises to the PML body. The protein localises to the cytoplasm. It is found in the membrane. Its subcellular location is the cell membrane. The protein resides in the cytoskeleton. It localises to the spindle. The protein localises to the spindle pole. It is found in the microtubule organizing center. Its subcellular location is the centrosome. The protein resides in the cell projection. It localises to the dendrite. The protein localises to the dendritic spine. It is found in the postsynaptic density. Functionally, regulates G protein-coupled receptor signaling cascades. Inhibits signal transduction by increasing the GTPase activity of G protein alpha subunits, thereby driving them into their inactive GDP-bound form. Besides, modulates signal transduction via G protein alpha subunits by functioning as a GDP-dissociation inhibitor (GDI). Has GDI activity on G(i) alpha subunits GNAI1 and GNAI3, but not on GNAI2 and G(o)-alpha subunit GNAO1. Has GAP activity on GNAI0, GNAI2 and GNAI3. May act as a scaffold integrating G protein and Ras/Raf MAPkinase signaling pathways. Inhibits platelet-derived growth factor (PDGF)-stimulated ERK1/ERK2 phosphorylation; a process depending on its interaction with HRAS and that is reversed by G(i) alpha subunit GNAI1. Acts as a positive modulator of microtubule polymerisation and spindle organization through a G(i)-alpha-dependent mechanism. Plays a role in cell division; required for completion of the first mitotic division of the embryo. Involved in visual memory processing capacity; when overexpressed in the V2 secondary visual cortex area. Involved in hippocampal-based learning and memory; acts as a suppressor of synaptic plasticity in CA2 neurons. Required for the nerve growth factor (NGF)-mediated neurite outgrowth. Involved in stress resistance. This chain is Regulator of G-protein signaling 14 (Rgs14), found in Mus musculus (Mouse).